We begin with the raw amino-acid sequence, 61 residues long: Metallothionein-2 (61 aa).

Methionine 1 carries the N-acetylmethionine modification. The interval 1–29 is beta; it reads MDPNCSCAAGGSCTCAGSCKCKECRCTSC. The a divalent metal cation site is built by cysteine 5, cysteine 7, cysteine 13, cysteine 15, cysteine 19, cysteine 21, cysteine 24, cysteine 26, cysteine 29, cysteine 33, cysteine 34, cysteine 36, cysteine 37, cysteine 41, cysteine 44, cysteine 48, cysteine 50, and cysteine 57. The segment at 30 to 61 is alpha; sequence KKSCCSCCPVGCAKCAQGCICKGASDKCSCCA. A Phosphoserine modification is found at serine 58. Residues cysteine 59 and cysteine 60 each contribute to the a divalent metal cation site.

The protein belongs to the metallothionein superfamily. Type 1 family. As to quaternary structure, interacts with EOLA1.

Its function is as follows. Metallothioneins have a high content of cysteine residues that bind various heavy metals; these proteins are transcriptionally regulated by both heavy metals and glucocorticoids. The polypeptide is Metallothionein-2 (MT2A) (Canis lupus familiaris (Dog)).